Reading from the N-terminus, the 267-residue chain is Acetyl-coenzyme A carboxylase carboxyl transferase subunit beta, chloroplastic (267 aa).

Residues 12-267 (LWKKCDSCNI…TIHMILDLHN (256 aa)) enclose the CoA carboxyltransferase N-terminal domain. Positions 16, 19, 35, and 38 each coordinate Zn(2+). The C4-type zinc finger occupies 16–38 (CDSCNILISKFDFYKHDKVCPEC).

The protein belongs to the AccD/PCCB family. In terms of assembly, acetyl-CoA carboxylase is a heterohexamer composed of biotin carboxyl carrier protein, biotin carboxylase and 2 subunits each of ACCase subunit alpha and ACCase plastid-coded subunit beta (accD). Zn(2+) is required as a cofactor.

The protein resides in the plastid. The protein localises to the chloroplast stroma. It carries out the reaction N(6)-carboxybiotinyl-L-lysyl-[protein] + acetyl-CoA = N(6)-biotinyl-L-lysyl-[protein] + malonyl-CoA. It participates in lipid metabolism; malonyl-CoA biosynthesis; malonyl-CoA from acetyl-CoA: step 1/1. In terms of biological role, component of the acetyl coenzyme A carboxylase (ACC) complex. Biotin carboxylase (BC) catalyzes the carboxylation of biotin on its carrier protein (BCCP) and then the CO(2) group is transferred by the transcarboxylase to acetyl-CoA to form malonyl-CoA. This chain is Acetyl-coenzyme A carboxylase carboxyl transferase subunit beta, chloroplastic, found in Cyanidium caldarium (Red alga).